The sequence spans 311 residues: Methionyl-tRNA formyltransferase (311 aa).

110–113 (SLLP) contributes to the (6S)-5,6,7,8-tetrahydrofolate binding site.

This sequence belongs to the Fmt family.

It carries out the reaction L-methionyl-tRNA(fMet) + (6R)-10-formyltetrahydrofolate = N-formyl-L-methionyl-tRNA(fMet) + (6S)-5,6,7,8-tetrahydrofolate + H(+). In terms of biological role, attaches a formyl group to the free amino group of methionyl-tRNA(fMet). The formyl group appears to play a dual role in the initiator identity of N-formylmethionyl-tRNA by promoting its recognition by IF2 and preventing the misappropriation of this tRNA by the elongation apparatus. The protein is Methionyl-tRNA formyltransferase of Sulfurihydrogenibium sp. (strain YO3AOP1).